Consider the following 385-residue polypeptide: 8-amino-7-oxononanoate synthase (385 aa).

Arg-21 contacts substrate. 108–109 (GF) provides a ligand contact to pyridoxal 5'-phosphate. Residue His-133 participates in substrate binding. Positions 179, 207, and 233 each coordinate pyridoxal 5'-phosphate. Lys-236 carries the post-translational modification N6-(pyridoxal phosphate)lysine. Thr-352 is a binding site for substrate.

The protein belongs to the class-II pyridoxal-phosphate-dependent aminotransferase family. BioF subfamily. In terms of assembly, homodimer. Requires pyridoxal 5'-phosphate as cofactor.

The catalysed reaction is 6-carboxyhexanoyl-[ACP] + L-alanine + H(+) = (8S)-8-amino-7-oxononanoate + holo-[ACP] + CO2. Its pathway is cofactor biosynthesis; biotin biosynthesis. In terms of biological role, catalyzes the decarboxylative condensation of pimeloyl-[acyl-carrier protein] and L-alanine to produce 8-amino-7-oxononanoate (AON), [acyl-carrier protein], and carbon dioxide. In Salmonella paratyphi A (strain ATCC 9150 / SARB42), this protein is 8-amino-7-oxononanoate synthase.